Here is an 82-residue protein sequence, read N- to C-terminus: Turripeptide IX-23 (82 aa).

Positions 1-23 (MMAKLMITVMMVLLLSLQQGADG) are cleaved as a signal peptide. Positions 24 to 50 (RSERWRKNQMAASSIMRNLITARIDPP) are excised as a propeptide. Intrachain disulfides connect Cys-53-Cys-68, Cys-58-Cys-72, and Cys-64-Cys-79.

This sequence belongs to the Pg turripeptide superfamily. As to expression, expressed by the venom duct.

Its subcellular location is the secreted. The polypeptide is Turripeptide IX-23 (Gemmula speciosa (Splendid gem-turris)).